The sequence spans 793 residues: Caldesmon (793 aa).

R12 is subject to Phosphoserine. E21 is subject to Phosphotyrosine. Disordered regions lie at residues 26 to 94 (AYQR…DDEA), 108 to 407 (QKRL…IKGE), and 434 to 458 (KKQG…KPTF). The tract at residues 26–207 (AYQRNDDDEE…PKRGSIGENQ (182 aa)) is myosin and calmodulin-binding. Residues 47 to 56 (QERLRQKQEE) show a composition bias toward basic and acidic residues. Over residues 60–74 (GQVTDQVEVNAQNSV) the composition is skewed to polar residues. Residues 108-122 (QKRLQEALERQKEFD) are compositionally biased toward basic and acidic residues. S129 carries the post-translational modification Phosphoserine. Basic and acidic residues-rich tracts occupy residues 146 to 162 (TTEK…RYEI) and 173 to 188 (QKND…KEDK). E196 and S202 each carry phosphoserine. Glycyl lysine isopeptide (Lys-Gly) (interchain with G-Cter in SUMO2) cross-links involve residues I203 and E209. Composition is skewed to basic and acidic residues over residues 236 to 407 (EEPK…IKGE) and 435 to 458 (KQGE…KPTF). 3 repeat units span residues 319–332 (EEEK…QRIK), 333–346 (EEEK…QRIK), and 347–360 (EEEK…QRIK). Residues 319–375 (EEEKRAAEERQRIKEEEKRAAEERQRIKEEEKRAAEERQRIKEEEKRAAEERQRARA) form a 3 X 14 AA tandem repeats of E-E-E-K-R-A-A-E-E-R-Q-R-I-K region. Residue K459 forms a Glycyl lysine isopeptide (Lys-Gly) (interchain with G-Cter in SUMO2) linkage. A disordered region spans residues 492–640 (KSQNGEFMTH…KKPFKCFTPK (149 aa)). Composition is skewed to basic and acidic residues over residues 532 to 558 (AGKR…KQKQ) and 566 to 633 (EELK…DKKP). The segment at 564–621 (ELEELKKKREERRKVLEEEEQRRKQEEADRKLREEEEKRRLKEEIERRRAEAAEKRQK) is tropomyosin-binding. The residue at position 643 (S643) is a Phosphoserine. A Glycyl lysine isopeptide (Lys-Gly) (interchain with G-Cter in SUMO2) cross-link involves residue K645. Positions 653–686 (LNKSVQKSSGVKSTHQAAIVSKIDSRLEQYTSAI) are strong actin-binding. S656 carries the phosphoserine modification. Residues 664–674 (KSTHQAAIVSK) are tropomyosin-binding. Disordered regions lie at residues 687–706 (EGTK…PVPA), 721–740 (VFSS…GLKV), and 747–793 (NEWL…PTKV). Residues 716 to 722 (WEKGNVF) form a calmodulin-binding region. Over residues 721-733 (VFSSPTAAGTPNK) the composition is skewed to polar residues. S724 is modified (phosphoserine). 2 positions are modified to phosphothreonine: T730 and T753. S759 carries the phosphoserine modification. The span at 765–784 (SDLRPGDVSSKRNLWEKQSV) shows a compositional bias: basic and acidic residues. The segment at 768–793 (RPGDVSSKRNLWEKQSVDKVTSPTKV) is weak actin-binding. A Phosphoserine modification is found at S789.

Belongs to the caldesmon family. In terms of processing, in non-muscle cells, phosphorylation by CDK1 during mitosis causes caldesmon to dissociate from microfilaments. Phosphorylation reduces caldesmon binding to actin, myosin, and calmodulin as well as its inhibition of actomyosin ATPase activity. Phosphorylation also occurs in both quiescent and dividing smooth muscle cells with similar effects on the interaction with actin and calmodulin and on microfilaments reorganization. CDK1-mediated phosphorylation promotes Schwann cell migration during peripheral nerve regeneration. In terms of tissue distribution, high-molecular-weight caldesmon (isoform 1) is predominantly expressed in smooth muscles, whereas low-molecular-weight caldesmon (isoforms 2, 3, 4 and 5) are widely distributed in non-muscle tissues and cells. Not expressed in skeletal muscle or heart.

The protein resides in the cytoplasm. It localises to the cytoskeleton. The protein localises to the myofibril. It is found in the stress fiber. Its function is as follows. Actin- and myosin-binding protein implicated in the regulation of actomyosin interactions in smooth muscle and nonmuscle cells (could act as a bridge between myosin and actin filaments). Stimulates actin binding of tropomyosin which increases the stabilization of actin filament structure. In muscle tissues, inhibits the actomyosin ATPase by binding to F-actin. This inhibition is attenuated by calcium-calmodulin and is potentiated by tropomyosin. Interacts with actin, myosin, two molecules of tropomyosin and with calmodulin. Also plays an essential role during cellular mitosis and receptor capping. Involved in Schwann cell migration during peripheral nerve regeneration. The sequence is that of Caldesmon (CALD1) from Homo sapiens (Human).